The following is a 119-amino-acid chain: Endocuticle structural glycoprotein SgAbd-3 (119 aa).

Glutamine 1 is modified (pyrrolidone carboxylic acid). One can recognise a Chitin-binding type R&amp;R domain in the interval 24 to 98 (DGSYRYSFET…PQGAHLPTPP (75 aa)). Positions 33 to 55 (TSDGQRASQEGALKQVSAPGPDG) are disordered. The O-linked (HexNAc...) threonine glycan is linked to threonine 96.

Component of the abdominal endocuticle. The protein is Endocuticle structural glycoprotein SgAbd-3 of Schistocerca gregaria (Desert locust).